Consider the following 365-residue polypeptide: Anhydro-N-acetylmuramic acid kinase (365 aa).

Position 12–19 (12–19 (GTSMDGMD)) interacts with ATP.

This sequence belongs to the anhydro-N-acetylmuramic acid kinase family.

It carries out the reaction 1,6-anhydro-N-acetyl-beta-muramate + ATP + H2O = N-acetyl-D-muramate 6-phosphate + ADP + H(+). The protein operates within amino-sugar metabolism; 1,6-anhydro-N-acetylmuramate degradation. It functions in the pathway cell wall biogenesis; peptidoglycan recycling. In terms of biological role, catalyzes the specific phosphorylation of 1,6-anhydro-N-acetylmuramic acid (anhMurNAc) with the simultaneous cleavage of the 1,6-anhydro ring, generating MurNAc-6-P. Is required for the utilization of anhMurNAc either imported from the medium or derived from its own cell wall murein, and thus plays a role in cell wall recycling. The protein is Anhydro-N-acetylmuramic acid kinase of Pseudomonas paraeruginosa (strain DSM 24068 / PA7) (Pseudomonas aeruginosa (strain PA7)).